A 174-amino-acid polypeptide reads, in one-letter code: RNA pyrophosphohydrolase (174 aa).

A Nudix hydrolase domain is found at 6–149 (GYRPNVGIIL…KRDVYLEALK (144 aa)). The short motif at 38 to 59 (GGIKPGESPETAMYRELYEEVG) is the Nudix box element.

The protein belongs to the Nudix hydrolase family. RppH subfamily. The cofactor is a divalent metal cation.

Functionally, accelerates the degradation of transcripts by removing pyrophosphate from the 5'-end of triphosphorylated RNA, leading to a more labile monophosphorylated state that can stimulate subsequent ribonuclease cleavage. In Neisseria gonorrhoeae (strain ATCC 700825 / FA 1090), this protein is RNA pyrophosphohydrolase.